Reading from the N-terminus, the 160-residue chain is MAIEGVLNEGFVTTTADKLINWTRTGSLWPMTFGLACCAVEMMHAGAARYDMDRFGVIFRPSPRQSDVMIVAGTLCNKMAPALRKVYDQMAEPRWVISMGSCANGGGYYHYSYSVVRGCDRIVPVDIYVPGCPPTAEALIYGVIQLQNKIKRTNTIARKG.

Residues Cys37, Cys38, Cys102, and Cys132 each contribute to the [4Fe-4S] cluster site.

This sequence belongs to the complex I 20 kDa subunit family. NDH-1 is composed of 14 different subunits. Subunits NuoB, C, D, E, F, and G constitute the peripheral sector of the complex. Requires [4Fe-4S] cluster as cofactor.

The protein localises to the cell inner membrane. The enzyme catalyses a quinone + NADH + 5 H(+)(in) = a quinol + NAD(+) + 4 H(+)(out). Its function is as follows. NDH-1 shuttles electrons from NADH, via FMN and iron-sulfur (Fe-S) centers, to quinones in the respiratory chain. Couples the redox reaction to proton translocation (for every two electrons transferred, four hydrogen ions are translocated across the cytoplasmic membrane), and thus conserves the redox energy in a proton gradient. The chain is NADH-quinone oxidoreductase subunit B from Cupriavidus metallidurans (strain ATCC 43123 / DSM 2839 / NBRC 102507 / CH34) (Ralstonia metallidurans).